A 440-amino-acid polypeptide reads, in one-letter code: Chromosome partition protein MukF (440 aa).

Positions 208 to 236 (LSETSGTLRELQDTLEAAGDKLQANLLRI) are leucine-zipper.

This sequence belongs to the MukF family. As to quaternary structure, interacts, and probably forms a ternary complex, with MukE and MukB via its C-terminal region. The complex formation is stimulated by calcium or magnesium. It is required for an interaction between MukE and MukB.

It is found in the cytoplasm. The protein localises to the nucleoid. Its function is as follows. Involved in chromosome condensation, segregation and cell cycle progression. May participate in facilitating chromosome segregation by condensation DNA from both sides of a centrally located replisome during cell division. Not required for mini-F plasmid partitioning. Probably acts via its interaction with MukB and MukE. Overexpression results in anucleate cells. It has a calcium binding activity. This chain is Chromosome partition protein MukF, found in Escherichia coli (strain UTI89 / UPEC).